A 146-amino-acid polypeptide reads, in one-letter code: MPEPAASSRGCVLGFDFGEKRIGVAIGEHLLGIAHPLVTIDAEANDKRFAAIAGLIEEWQPEMLVVGLPSYLNGDEHALTQLCRKFARRLEGRFNLPVQLVDERLSSAEASQTLKQSGISGRKQKSVLDQVAAQHILQSYFDGLAS.

This sequence belongs to the YqgF nuclease family.

The protein localises to the cytoplasm. Functionally, could be a nuclease involved in processing of the 5'-end of pre-16S rRNA. This chain is Putative pre-16S rRNA nuclease, found in Methylobacillus flagellatus (strain ATCC 51484 / DSM 6875 / VKM B-1610 / KT).